The chain runs to 364 residues: MQERHTEQDYRALLIADTPIIDVRAPIEFEQGAMPAAINLPLMDNDERASVGTCYKQQGSDAALALGHKLVAGEIRQQRMYAWRAACLQNPQGILCCARGGQRSHIVQRWLHEAGIDYPLVEGGYKALRQTAIQATIELAQKPIVLIGGCTGSGKTLLVQQQPNGVDLEGLARHRGSAFGRTLQPQLSQASFENLLAAEMLKTDARQDLRLWVLEDESRMIGSNHLPECLRERMTQAAIAVVEDPFEIRLERLNEEYFLRMHHDFTHAYGDEQGWQEYCEYLHHGLSAIKRRLGLQRYNELAAQLDTALTTQLTTGSTDGHLAWLVPLLKEYYDPMYRYQLEKKAEKVVFRGEWAEVAVWVKAQ.

The Rhodanese domain maps to 14–137 (LIADTPIIDV…LRQTAIQATI (124 aa)). Cys-97 functions as the S-selanylcysteine intermediate in the catalytic mechanism.

The protein belongs to the SelU family. As to quaternary structure, monomer.

It carries out the reaction 5-methylaminomethyl-2-thiouridine(34) in tRNA + selenophosphate + (2E)-geranyl diphosphate + H2O + H(+) = 5-methylaminomethyl-2-selenouridine(34) in tRNA + (2E)-thiogeraniol + phosphate + diphosphate. The enzyme catalyses 5-methylaminomethyl-2-thiouridine(34) in tRNA + (2E)-geranyl diphosphate = 5-methylaminomethyl-S-(2E)-geranyl-thiouridine(34) in tRNA + diphosphate. It catalyses the reaction 5-methylaminomethyl-S-(2E)-geranyl-thiouridine(34) in tRNA + selenophosphate + H(+) = 5-methylaminomethyl-2-(Se-phospho)selenouridine(34) in tRNA + (2E)-thiogeraniol. The catalysed reaction is 5-methylaminomethyl-2-(Se-phospho)selenouridine(34) in tRNA + H2O = 5-methylaminomethyl-2-selenouridine(34) in tRNA + phosphate. Functionally, involved in the post-transcriptional modification of the uridine at the wobble position (U34) of tRNA(Lys), tRNA(Glu) and tRNA(Gln). Catalyzes the conversion of 2-thiouridine (S2U-RNA) to 2-selenouridine (Se2U-RNA). Acts in a two-step process involving geranylation of 2-thiouridine (S2U) to S-geranyl-2-thiouridine (geS2U) and subsequent selenation of the latter derivative to 2-selenouridine (Se2U) in the tRNA chain. The sequence is that of tRNA 2-selenouridine synthase from Shigella flexneri.